The sequence spans 317 residues: Lysosomal-associated transmembrane protein 4B (317 aa).

The interval 25–73 (AFGAKGTDPAEARSSRGIEEAGPRAHGRAGREPERRRSRQQRRGGLQAR) is disordered. Basic and acidic residues predominate over residues 32–59 (DPAEARSSRGIEEAGPRAHGRAGREPER). 4 helical membrane passes run 117–137 (ILLG…LLSA), 163–183 (MCIA…ATYG), 191–211 (WIIP…LVAI), and 244–264 (CLVL…GYLI). Residues 205–221 (LNMLVAITVLIYPNSIQ) are required for NEDD4 interaction.

The protein belongs to the LAPTM4/LAPTM5 transporter family. In terms of assembly, homooligomer; upon reaching the lysosomes. Interacts with MCOLN1. Interacts with NEDD4; may play a role in the lysosomal sorting of LAPTM4B; enhances HGS association with NEDD4; mediates inhibition of EGFR degradation. Interacts with PIP5K1C; promotes SNX5 association with LAPTM4B; kinase activity of PIP5K1C is required; interaction is regulated by phosphatidylinositol 4,5-bisphosphate generated by PIP5K1C. Interacts with HGS; promotes HGS ubiquitination. Interacts with SNX5. Interacts with SLC3A2 and SLC7A5; recruits SLC3A2 and SLC7A5 to lysosomes to promote leucine uptake into these organelles and is required for mTORC1 activation. Interacts with LRRC32; decreases TGFB1 production in regulatory T cells. Interacts with BECN1; competes with EGFR for LAPTM4B binding; regulates EGFR activity. Interacts with EGFR; positively correlates with EGFR activation. Undergoes proteolytic cleavage following delivery to the lysosomes. In terms of processing, ubiquitinated by NEDD4.

It is found in the endomembrane system. Its subcellular location is the late endosome membrane. It localises to the cell membrane. The protein localises to the cell projection. The protein resides in the lysosome membrane. It is found in the endosome membrane. Its subcellular location is the endosome. It localises to the multivesicular body membrane. The protein localises to the multivesicular body lumen. Functionally, required for optimal lysosomal function. Blocks EGF-stimulated EGFR intraluminal sorting and degradation. Conversely by binding with the phosphatidylinositol 4,5-bisphosphate, regulates its PIP5K1C interaction, inhibits HGS ubiquitination and relieves LAPTM4B inhibition of EGFR degradation. Recruits SLC3A2 and SLC7A5 (the Leu transporter) to the lysosome, promoting entry of leucine and other essential amino acid (EAA) into the lysosome, stimulating activation of proton-transporting vacuolar (V)-ATPase protein pump (V-ATPase) and hence mTORC1 activation. Plays a role as negative regulator of TGFB1 production in regulatory T cells. Binds ceramide and facilitates its exit from late endosome in order to control cell death pathways. This Homo sapiens (Human) protein is Lysosomal-associated transmembrane protein 4B.